Reading from the N-terminus, the 131-residue chain is Large ribosomal subunit protein bL17 (131 aa).

This sequence belongs to the bacterial ribosomal protein bL17 family. Part of the 50S ribosomal subunit. Contacts protein L32.

This chain is Large ribosomal subunit protein bL17, found in Thermotoga sp. (strain RQ2).